The chain runs to 319 residues: Lipoyl synthase (319 aa).

Residues 1–12 (MVTIVDTLSNTP) are compositionally biased toward polar residues. The segment at 1-32 (MVTIVDTLSNTPLRPRHPEKANRPDSISPAKP) is disordered. Cys61, Cys66, Cys72, Cys87, Cys91, Cys94, and Ser300 together coordinate [4Fe-4S] cluster. The 217-residue stretch at 73-289 (WDKKHATFMI…ETVAYTKGFL (217 aa)) folds into the Radical SAM core domain.

This sequence belongs to the radical SAM superfamily. Lipoyl synthase family. The cofactor is [4Fe-4S] cluster.

It is found in the cytoplasm. The enzyme catalyses [[Fe-S] cluster scaffold protein carrying a second [4Fe-4S](2+) cluster] + N(6)-octanoyl-L-lysyl-[protein] + 2 oxidized [2Fe-2S]-[ferredoxin] + 2 S-adenosyl-L-methionine + 4 H(+) = [[Fe-S] cluster scaffold protein] + N(6)-[(R)-dihydrolipoyl]-L-lysyl-[protein] + 4 Fe(3+) + 2 hydrogen sulfide + 2 5'-deoxyadenosine + 2 L-methionine + 2 reduced [2Fe-2S]-[ferredoxin]. Its pathway is protein modification; protein lipoylation via endogenous pathway; protein N(6)-(lipoyl)lysine from octanoyl-[acyl-carrier-protein]: step 2/2. Functionally, catalyzes the radical-mediated insertion of two sulfur atoms into the C-6 and C-8 positions of the octanoyl moiety bound to the lipoyl domains of lipoate-dependent enzymes, thereby converting the octanoylated domains into lipoylated derivatives. This is Lipoyl synthase from Bradyrhizobium sp. (strain BTAi1 / ATCC BAA-1182).